Reading from the N-terminus, the 313-residue chain is BTB/POZ domain-containing adapter for CUL3-mediated RhoA degradation protein 3 (313 aa).

Met1 carries the N-acetylmethionine modification. Ser23 carries the post-translational modification Phosphoserine. Positions 32 to 100 constitute a BTB domain; that stretch reads KYVKLNVGGA…LRDGAVPLPE (69 aa). A PCNA-binding motif is present at residues 239-245; sequence QTKVEFP.

The protein belongs to the BACURD family. As to quaternary structure, homotetramer; forms a two-fold symmetric tetramer in solution. Interacts with CUL3; interaction is direct and forms a 5:5 heterodecamer. Component of the BCR(BACURD3) E3 ubiquitin ligase complex, at least composed of CUL3, KCTD10/BACURD3 and RBX1. Interacts with DNA polymerase delta subunit 2/POLD2. Interacts with PCNA.

It localises to the nucleus. The protein operates within protein modification; protein ubiquitination. In terms of biological role, substrate-specific adapter of a BCR (BTB-CUL3-RBX1) E3 ubiquitin-protein ligase complex. The BCR(BACURD3) E3 ubiquitin ligase complex mediates the ubiquitination of target proteins, leading to their degradation by the proteasome. This is BTB/POZ domain-containing adapter for CUL3-mediated RhoA degradation protein 3 (KCTD10) from Homo sapiens (Human).